A 242-amino-acid polypeptide reads, in one-letter code: Probable 2-phosphosulfolactate phosphatase (242 aa).

This sequence belongs to the ComB family. Requires Mg(2+) as cofactor.

It carries out the reaction (2R)-O-phospho-3-sulfolactate + H2O = (2R)-3-sulfolactate + phosphate. The sequence is that of Probable 2-phosphosulfolactate phosphatase from Synechococcus sp. (strain JA-2-3B'a(2-13)) (Cyanobacteria bacterium Yellowstone B-Prime).